A 345-amino-acid chain; its full sequence is Inositol phosphoceramide mannosyltransferase 2 (345 aa).

The chain crosses the membrane as a helical span at residues 4 to 24; it reads VIYKFAVFAAVNFFLMSSIVL. N55 carries N-linked (GlcNAc...) asparagine glycosylation. The chain crosses the membrane as a helical span at residues 220–240; that stretch reads YWLPYLTIMLSTGPLSISFLW. The N-linked (GlcNAc...) asparagine glycan is linked to N269. A helical membrane pass occupies residues 296 to 316; sequence LAYVIVAGFCLYFILSYMFFS.

This sequence belongs to the glycosyltransferase 32 family.

It is found in the golgi apparatus. Its subcellular location is the cis-Golgi network membrane. The protein resides in the trans-Golgi network membrane. With imt1 and imt3, is required for the synthesis of mannosyl phosphorylinositol ceramide (MIPC). Catalyzes the addition of mannosyl to phosphorylinositol ceramide (IPC). MIPC is essential for cell morphology, cell-surface distribution of ergosterol, localization for plasma-membrane transporters, and lipid-raft-mediated endocytosis of plasma membrane proteins to the vacuole. This chain is Inositol phosphoceramide mannosyltransferase 2, found in Schizosaccharomyces pombe (strain 972 / ATCC 24843) (Fission yeast).